The sequence spans 329 residues: Acetyl-coenzyme A carboxylase carboxyl transferase subunit alpha (329 aa).

The region spanning 40–294 is the CoA carboxyltransferase C-terminal domain; sequence QLESLAARRR…RAALERHLGE (255 aa).

It belongs to the AccA family. As to quaternary structure, acetyl-CoA carboxylase is a heterohexamer composed of biotin carboxyl carrier protein (AccB), biotin carboxylase (AccC) and two subunits each of ACCase subunit alpha (AccA) and ACCase subunit beta (AccD).

The protein resides in the cytoplasm. It carries out the reaction N(6)-carboxybiotinyl-L-lysyl-[protein] + acetyl-CoA = N(6)-biotinyl-L-lysyl-[protein] + malonyl-CoA. Its pathway is lipid metabolism; malonyl-CoA biosynthesis; malonyl-CoA from acetyl-CoA: step 1/1. Functionally, component of the acetyl coenzyme A carboxylase (ACC) complex. First, biotin carboxylase catalyzes the carboxylation of biotin on its carrier protein (BCCP) and then the CO(2) group is transferred by the carboxyltransferase to acetyl-CoA to form malonyl-CoA. The chain is Acetyl-coenzyme A carboxylase carboxyl transferase subunit alpha from Parasynechococcus marenigrum (strain WH8102).